The following is a 257-amino-acid chain: 1-(5-phosphoribosyl)-5-[(5-phosphoribosylamino)methylideneamino] imidazole-4-carboxamide isomerase (257 aa).

The Proton acceptor role is filled by D8. The active-site Proton donor is D129.

Belongs to the HisA/HisF family.

Its subcellular location is the cytoplasm. It carries out the reaction 1-(5-phospho-beta-D-ribosyl)-5-[(5-phospho-beta-D-ribosylamino)methylideneamino]imidazole-4-carboxamide = 5-[(5-phospho-1-deoxy-D-ribulos-1-ylimino)methylamino]-1-(5-phospho-beta-D-ribosyl)imidazole-4-carboxamide. The protein operates within amino-acid biosynthesis; L-histidine biosynthesis; L-histidine from 5-phospho-alpha-D-ribose 1-diphosphate: step 4/9. This Trichormus variabilis (strain ATCC 29413 / PCC 7937) (Anabaena variabilis) protein is 1-(5-phosphoribosyl)-5-[(5-phosphoribosylamino)methylideneamino] imidazole-4-carboxamide isomerase.